The sequence spans 128 residues: UPF0325 protein YaeH (128 aa).

This sequence belongs to the UPF0325 family.

This chain is UPF0325 protein YaeH, found in Shigella boydii serotype 18 (strain CDC 3083-94 / BS512).